The sequence spans 420 residues: Serine hydroxymethyltransferase (420 aa).

(6S)-5,6,7,8-tetrahydrofolate-binding positions include leucine 121 and 125–127 (GHL). Position 230 is an N6-(pyridoxal phosphate)lysine (lysine 230). 355-357 (SPF) serves as a coordination point for (6S)-5,6,7,8-tetrahydrofolate.

Belongs to the SHMT family. In terms of assembly, homodimer. Pyridoxal 5'-phosphate is required as a cofactor.

Its subcellular location is the cytoplasm. It carries out the reaction (6R)-5,10-methylene-5,6,7,8-tetrahydrofolate + glycine + H2O = (6S)-5,6,7,8-tetrahydrofolate + L-serine. It participates in one-carbon metabolism; tetrahydrofolate interconversion. The protein operates within amino-acid biosynthesis; glycine biosynthesis; glycine from L-serine: step 1/1. Its function is as follows. Catalyzes the reversible interconversion of serine and glycine with tetrahydrofolate (THF) serving as the one-carbon carrier. This reaction serves as the major source of one-carbon groups required for the biosynthesis of purines, thymidylate, methionine, and other important biomolecules. Also exhibits THF-independent aldolase activity toward beta-hydroxyamino acids, producing glycine and aldehydes, via a retro-aldol mechanism. In Streptococcus mutans serotype c (strain ATCC 700610 / UA159), this protein is Serine hydroxymethyltransferase.